Here is a 345-residue protein sequence, read N- to C-terminus: Phosphate acyltransferase (345 aa).

Belongs to the PlsX family. In terms of assembly, homodimer. Probably interacts with PlsY.

It is found in the cytoplasm. It carries out the reaction a fatty acyl-[ACP] + phosphate = an acyl phosphate + holo-[ACP]. It participates in lipid metabolism; phospholipid metabolism. Its function is as follows. Catalyzes the reversible formation of acyl-phosphate (acyl-PO(4)) from acyl-[acyl-carrier-protein] (acyl-ACP). This enzyme utilizes acyl-ACP as fatty acyl donor, but not acyl-CoA. The chain is Phosphate acyltransferase from Wolbachia sp. subsp. Brugia malayi (strain TRS).